Reading from the N-terminus, the 348-residue chain is D-erythrose-4-phosphate dehydrogenase (348 aa).

Residues 12–13 (RI) and Arg-81 each bind NAD(+). Residues 154–156 (SCT), Arg-200, 213–214 (TK), and Arg-236 each bind substrate. Cys-155 serves as the catalytic Nucleophile. Asn-318 provides a ligand contact to NAD(+).

The protein belongs to the glyceraldehyde-3-phosphate dehydrogenase family. Epd subfamily. Homotetramer.

It localises to the cytoplasm. It carries out the reaction D-erythrose 4-phosphate + NAD(+) + H2O = 4-phospho-D-erythronate + NADH + 2 H(+). It functions in the pathway cofactor biosynthesis; pyridoxine 5'-phosphate biosynthesis; pyridoxine 5'-phosphate from D-erythrose 4-phosphate: step 1/5. Catalyzes the NAD-dependent conversion of D-erythrose 4-phosphate to 4-phosphoerythronate. In Salmonella paratyphi A (strain ATCC 9150 / SARB42), this protein is D-erythrose-4-phosphate dehydrogenase.